A 707-amino-acid polypeptide reads, in one-letter code: UvrABC system protein C (707 aa).

The 81-residue stretch at 14-94 (AEPGCYLMKD…IKKHRPRFNV (81 aa)) folds into the GIY-YIG domain. The UVR domain occupies 206–241 (GELVERLRGRMAGAAEGLRFEEAARLRDQLQAVERS). Residues 654–684 (PDAPPAAADEPSGAPEGTPAGGPAEAIPDAA) form a disordered region. The segment covering 658–684 (PAAADEPSGAPEGTPAGGPAEAIPDAA) has biased composition (low complexity).

This sequence belongs to the UvrC family. As to quaternary structure, interacts with UvrB in an incision complex.

The protein localises to the cytoplasm. The UvrABC repair system catalyzes the recognition and processing of DNA lesions. UvrC both incises the 5' and 3' sides of the lesion. The N-terminal half is responsible for the 3' incision and the C-terminal half is responsible for the 5' incision. The chain is UvrABC system protein C from Anaeromyxobacter dehalogenans (strain 2CP-C).